A 243-amino-acid chain; its full sequence is Ribonuclease PH (243 aa).

Phosphate is bound by residues R91 and 129-131 (GTR).

This sequence belongs to the RNase PH family. Homohexameric ring arranged as a trimer of dimers.

It carries out the reaction tRNA(n+1) + phosphate = tRNA(n) + a ribonucleoside 5'-diphosphate. Its function is as follows. Phosphorolytic 3'-5' exoribonuclease that plays an important role in tRNA 3'-end maturation. Removes nucleotide residues following the 3'-CCA terminus of tRNAs; can also add nucleotides to the ends of RNA molecules by using nucleoside diphosphates as substrates, but this may not be physiologically important. Probably plays a role in initiation of 16S rRNA degradation (leading to ribosome degradation) during starvation. The chain is Ribonuclease PH from Burkholderia lata (strain ATCC 17760 / DSM 23089 / LMG 22485 / NCIMB 9086 / R18194 / 383).